A 466-amino-acid polypeptide reads, in one-letter code: Endoglucanase E-5 (466 aa).

The signal sequence occupies residues methionine 1–alanine 36. Residues alanine 37–glycine 139 enclose the CBM2 domain. Residues cysteine 129–glutamate 166 are disordered. Glutamate 299 functions as the Proton donor in the catalytic mechanism. Glutamate 391 acts as the Nucleophile in catalysis.

Belongs to the glycosyl hydrolase 5 (cellulase A) family.

The enzyme catalyses Endohydrolysis of (1-&gt;4)-beta-D-glucosidic linkages in cellulose, lichenin and cereal beta-D-glucans.. Its pathway is glycan metabolism; cellulose degradation. This Thermobifida fusca (Thermomonospora fusca) protein is Endoglucanase E-5 (celE).